The primary structure comprises 739 residues: Catalase-peroxidase (739 aa).

The tract at residues methionine 1–glycine 33 is disordered. The tryptophyl-tyrosyl-methioninium (Trp-Tyr) (with M-255) cross-link spans tryptophan 106 to tyrosine 229. Residue histidine 107 is the Proton acceptor of the active site. The disordered stretch occupies residues arginine 113–tryptophan 134. Residues tyrosine 229–methionine 255 constitute a cross-link (tryptophyl-tyrosyl-methioninium (Tyr-Met) (with W-106)). Heme b is bound at residue histidine 270.

Belongs to the peroxidase family. Peroxidase/catalase subfamily. Homodimer or homotetramer. Heme b is required as a cofactor. Formation of the three residue Trp-Tyr-Met cross-link is important for the catalase, but not the peroxidase activity of the enzyme.

The enzyme catalyses H2O2 + AH2 = A + 2 H2O. It catalyses the reaction 2 H2O2 = O2 + 2 H2O. Its function is as follows. Bifunctional enzyme with both catalase and broad-spectrum peroxidase activity. This Nocardia farcinica (strain IFM 10152) protein is Catalase-peroxidase.